A 385-amino-acid polypeptide reads, in one-letter code: Phospho-N-acetylmuramoyl-pentapeptide-transferase (385 aa).

The next 10 membrane-spanning stretches (helical) occupy residues 23-43 (FITV…LGAG), 79-99 (MGGI…GAVA), 103-123 (VWLS…DDYV), 135-155 (AWYK…VLYF), 186-206 (LGVD…VTAV), 218-238 (GLTT…VYVS), 258-278 (LTVF…YNGY), 282-302 (VFMG…TILM), 307-327 (LLLP…IVQT), and 362-382 (KIVT…LLIL).

The protein belongs to the glycosyltransferase 4 family. MraY subfamily. Mg(2+) is required as a cofactor.

It is found in the cell inner membrane. It catalyses the reaction UDP-N-acetyl-alpha-D-muramoyl-L-alanyl-gamma-D-glutamyl-meso-2,6-diaminopimeloyl-D-alanyl-D-alanine + di-trans,octa-cis-undecaprenyl phosphate = di-trans,octa-cis-undecaprenyl diphospho-N-acetyl-alpha-D-muramoyl-L-alanyl-D-glutamyl-meso-2,6-diaminopimeloyl-D-alanyl-D-alanine + UMP. It participates in cell wall biogenesis; peptidoglycan biosynthesis. Functionally, catalyzes the initial step of the lipid cycle reactions in the biosynthesis of the cell wall peptidoglycan: transfers peptidoglycan precursor phospho-MurNAc-pentapeptide from UDP-MurNAc-pentapeptide onto the lipid carrier undecaprenyl phosphate, yielding undecaprenyl-pyrophosphoryl-MurNAc-pentapeptide, known as lipid I. This Salinibacter ruber (strain DSM 13855 / M31) protein is Phospho-N-acetylmuramoyl-pentapeptide-transferase.